A 325-amino-acid chain; its full sequence is Putative aryl-alcohol dehydrogenase C750.01 (325 aa).

Belongs to the aldo/keto reductase family. Aldo/keto reductase 2 subfamily.

In Schizosaccharomyces pombe (strain 972 / ATCC 24843) (Fission yeast), this protein is Putative aryl-alcohol dehydrogenase C750.01.